An 82-amino-acid chain; its full sequence is Putative membrane protein insertion efficiency factor (82 aa).

The protein belongs to the UPF0161 family.

It localises to the cell inner membrane. Functionally, could be involved in insertion of integral membrane proteins into the membrane. This Francisella tularensis subsp. holarctica (strain LVS) protein is Putative membrane protein insertion efficiency factor.